We begin with the raw amino-acid sequence, 361 residues long: RLA class I histocompatibility antigen, alpha chain 11/11 (361 aa).

Residues 1-24 form the signal peptide; that stretch reads MGSMAPRTLLLLLAGALTLKDTQA. Residues 25-114 are alpha-1; the sequence is GSHSMRYFYT…ALRYYNQSAA (90 aa). At 25 to 308 the chain is on the extracellular side; sequence GSHSMRYFYT…EPPAQPTALI (284 aa). The N-linked (GlcNAc...) asparagine glycan is linked to Asn110. Residues 115-206 form an alpha-2 region; sequence GSHTFQTMFG…EMGKETLQRA (92 aa). Intrachain disulfides connect Cys125–Cys188 and Cys227–Cys283. The alpha-3 stretch occupies residues 207-298; it reads DPPKAHVTHH…GLPEPLTLTW (92 aa). Residues 209–297 form the Ig-like C1-type domain; that stretch reads PKAHVTHHPA…EGLPEPLTLT (89 aa). Positions 299–308 are connecting peptide; the sequence is EPPAQPTALI. The chain crosses the membrane as a helical span at residues 309–329; that stretch reads VGIVAGVLGVLLILGAVVAVV. The Cytoplasmic portion of the chain corresponds to 330-361; it reads RRKKHSSDGKGGRYTPAAGGHRDQGSDDSLMP. The interval 335 to 361 is disordered; it reads SSDGKGGRYTPAAGGHRDQGSDDSLMP. Phosphoserine occurs at positions 355 and 358.

Belongs to the MHC class I family. Heterodimer of an alpha chain and a beta chain (beta-2-microglobulin).

The protein resides in the membrane. Involved in the presentation of foreign antigens to the immune system. This chain is RLA class I histocompatibility antigen, alpha chain 11/11, found in Oryctolagus cuniculus (Rabbit).